Here is a 260-residue protein sequence, read N- to C-terminus: MGRGKIEIKRIENATNRQVTFSKRRGGLLKKANELAVLCDARVGVVIFSSTGKMFEYCSPTCSLRELIEHYQTVTNTHFEEINHDQQIFVEMTRMRNEMEKLDGGIRRFTGDDLSNLTLADINDLEQQLEFSVTKVRARKHQLLNQQLDNLRRKEHILEDQNSFLCRMINENHHQAAVGGGDVKAMVEMAPVLSMLTAAPAYYGEESSSTALQLTPPLHAVDAAAAAGFRLQPTQPNLQDPGCSSSSFHAAAAGHGLQLW.

Residues Met-1–Thr-61 enclose the MADS-box domain. Residues Asp-85 to Gln-175 form the K-box domain.

As to expression, expressed in developing seeds.

The protein localises to the nucleus. In terms of biological role, probable transcription factor. The chain is MADS-box transcription factor 29 (MADS29) from Oryza sativa subsp. japonica (Rice).